Reading from the N-terminus, the 429-residue chain is Bifunctional protein GlmU (429 aa).

Positions 1-223 are pyrophosphorylase; the sequence is MKTSILILAA…EDEFMGINDK (223 aa). UDP-N-acetyl-alpha-D-glucosamine-binding positions include 8–11, Lys22, and 81–82; these read LAAG and GT. A Mg(2+)-binding site is contributed by Asp102. 4 residues coordinate UDP-N-acetyl-alpha-D-glucosamine: Gly135, Glu149, Asn164, and Asn221. Asn221 contributes to the Mg(2+) binding site. Residues 224 to 244 are linker; sequence FELSIAENFMQKKIKKYWMQQ. The N-acetyltransferase stretch occupies residues 245–429; the sequence is GVIFHLPQST…KDYYYKKFQK (185 aa). Positions 308 and 325 each coordinate UDP-N-acetyl-alpha-D-glucosamine. His336 (proton acceptor) is an active-site residue. UDP-N-acetyl-alpha-D-glucosamine-binding residues include Tyr339 and Asn350. Residues 359-360, Ser378, Ala396, and Arg413 contribute to the acetyl-CoA site; that span reads NY.

This sequence in the N-terminal section; belongs to the N-acetylglucosamine-1-phosphate uridyltransferase family. The protein in the C-terminal section; belongs to the transferase hexapeptide repeat family. Homotrimer. Requires Mg(2+) as cofactor.

The protein localises to the cytoplasm. The enzyme catalyses alpha-D-glucosamine 1-phosphate + acetyl-CoA = N-acetyl-alpha-D-glucosamine 1-phosphate + CoA + H(+). The catalysed reaction is N-acetyl-alpha-D-glucosamine 1-phosphate + UTP + H(+) = UDP-N-acetyl-alpha-D-glucosamine + diphosphate. The protein operates within nucleotide-sugar biosynthesis; UDP-N-acetyl-alpha-D-glucosamine biosynthesis; N-acetyl-alpha-D-glucosamine 1-phosphate from alpha-D-glucosamine 6-phosphate (route II): step 2/2. Its pathway is nucleotide-sugar biosynthesis; UDP-N-acetyl-alpha-D-glucosamine biosynthesis; UDP-N-acetyl-alpha-D-glucosamine from N-acetyl-alpha-D-glucosamine 1-phosphate: step 1/1. It functions in the pathway bacterial outer membrane biogenesis; LPS lipid A biosynthesis. Functionally, catalyzes the last two sequential reactions in the de novo biosynthetic pathway for UDP-N-acetylglucosamine (UDP-GlcNAc). The C-terminal domain catalyzes the transfer of acetyl group from acetyl coenzyme A to glucosamine-1-phosphate (GlcN-1-P) to produce N-acetylglucosamine-1-phosphate (GlcNAc-1-P), which is converted into UDP-GlcNAc by the transfer of uridine 5-monophosphate (from uridine 5-triphosphate), a reaction catalyzed by the N-terminal domain. This Campylobacter jejuni subsp. jejuni serotype O:2 (strain ATCC 700819 / NCTC 11168) protein is Bifunctional protein GlmU.